The sequence spans 129 residues: Small ribosomal subunit protein uS11 (129 aa).

This sequence belongs to the universal ribosomal protein uS11 family. As to quaternary structure, part of the 30S ribosomal subunit. Interacts with proteins S7 and S18. Binds to IF-3.

Its function is as follows. Located on the platform of the 30S subunit, it bridges several disparate RNA helices of the 16S rRNA. Forms part of the Shine-Dalgarno cleft in the 70S ribosome. The chain is Small ribosomal subunit protein uS11 from Marinobacter nauticus (strain ATCC 700491 / DSM 11845 / VT8) (Marinobacter aquaeolei).